Consider the following 375-residue polypeptide: Succinyl-diaminopimelate desuccinylase (375 aa).

His-66 contributes to the Zn(2+) binding site. Residue Asp-68 is part of the active site. Asp-99 serves as a coordination point for Zn(2+). The active-site Proton acceptor is Glu-130. Positions 131, 159, and 345 each coordinate Zn(2+).

This sequence belongs to the peptidase M20A family. DapE subfamily. Homodimer. It depends on Zn(2+) as a cofactor. The cofactor is Co(2+).

The catalysed reaction is N-succinyl-(2S,6S)-2,6-diaminopimelate + H2O = (2S,6S)-2,6-diaminopimelate + succinate. It participates in amino-acid biosynthesis; L-lysine biosynthesis via DAP pathway; LL-2,6-diaminopimelate from (S)-tetrahydrodipicolinate (succinylase route): step 3/3. Its function is as follows. Catalyzes the hydrolysis of N-succinyl-L,L-diaminopimelic acid (SDAP), forming succinate and LL-2,6-diaminopimelate (DAP), an intermediate involved in the bacterial biosynthesis of lysine and meso-diaminopimelic acid, an essential component of bacterial cell walls. This Xanthobacter autotrophicus (strain ATCC BAA-1158 / Py2) protein is Succinyl-diaminopimelate desuccinylase.